The primary structure comprises 139 residues: ATP synthase epsilon chain (139 aa).

The protein belongs to the ATPase epsilon chain family. F-type ATPases have 2 components, CF(1) - the catalytic core - and CF(0) - the membrane proton channel. CF(1) has five subunits: alpha(3), beta(3), gamma(1), delta(1), epsilon(1). CF(0) has three main subunits: a, b and c.

It localises to the cell inner membrane. In terms of biological role, produces ATP from ADP in the presence of a proton gradient across the membrane. The chain is ATP synthase epsilon chain from Pseudomonas putida (strain ATCC 47054 / DSM 6125 / CFBP 8728 / NCIMB 11950 / KT2440).